The primary structure comprises 491 residues: F-box/LRR-repeat protein 7 (491 aa).

Residues 1–79 (MGANNGKQYG…GRGSSTSSSS (79 aa)) are disordered. The span at 10 to 26 (GSEGKGSSSISSDVSSS) shows a compositional bias: low complexity. Positions 27-55 (TDHTPTKAQKNVATSEDSDLSMRTLSTPS) are enriched in polar residues. Positions 111–157 (QASIDRLPDHSMVQIFSFLPTNQLCRCARVCRRWYNLAWDPRLWRTI) constitute an F-box domain. LRR repeat units lie at residues 170-195 (LKVL…TVSG), 196-221 (CRRL…EVSG), 222-247 (CYNI…DVSG), 253-281 (CISL…DMTD), 282-307 (CFVL…YLRR), 308-333 (CVRL…SVSD), 334-359 (CRFV…SIAH), 360-385 (CGRV…NARG), 386-411 (CEGI…DIGK), 412-437 (CPLV…SLKS), and 438-463 (CESI…NVQD).

The protein belongs to the FBXL7 family. In terms of assembly, part of the SCF (SKP1-CUL1-F-box) E3 ubiquitin-protein ligase complex SCF(FBXL7) composed of CUL1, SKP1, RBX1 and FBXL7. Interacts with AURKA; interaction takes place during mitosis but not in interphase. Interacts with BIRC5; this interaction allows BIRC5 to be polyubiquitinated by the SCF(FBXL7) E3 ubiquitin-protein ligase complex.

It is found in the cytoplasm. Its subcellular location is the cytoskeleton. The protein resides in the microtubule organizing center. It localises to the centrosome. The protein operates within protein modification; protein ubiquitination. In terms of biological role, substrate recognition component of a SCF (SKP1-CUL1-F-box protein) E3 ubiquitin-protein ligase complex. During mitosis, it mediates the ubiquitination and subsequent proteasomal degradation of AURKA, causing mitotic arrest. It also regulates mitochondrial function by mediating the ubiquitination and proteasomal degradation of the apoptosis inhibitor BIRC5. The polypeptide is F-box/LRR-repeat protein 7 (FBXL7) (Homo sapiens (Human)).